Here is a 670-residue protein sequence, read N- to C-terminus: UvrABC system protein B (670 aa).

The region spanning E26–R414 is the Helicase ATP-binding domain. G39–T46 contributes to the ATP binding site. Residues Y92–V115 carry the Beta-hairpin motif. One can recognise a Helicase C-terminal domain in the interval Q431–L597. The UVR domain maps to E630–Q665.

Belongs to the UvrB family. Forms a heterotetramer with UvrA during the search for lesions. Interacts with UvrC in an incision complex.

It localises to the cytoplasm. Functionally, the UvrABC repair system catalyzes the recognition and processing of DNA lesions. A damage recognition complex composed of 2 UvrA and 2 UvrB subunits scans DNA for abnormalities. Upon binding of the UvrA(2)B(2) complex to a putative damaged site, the DNA wraps around one UvrB monomer. DNA wrap is dependent on ATP binding by UvrB and probably causes local melting of the DNA helix, facilitating insertion of UvrB beta-hairpin between the DNA strands. Then UvrB probes one DNA strand for the presence of a lesion. If a lesion is found the UvrA subunits dissociate and the UvrB-DNA preincision complex is formed. This complex is subsequently bound by UvrC and the second UvrB is released. If no lesion is found, the DNA wraps around the other UvrB subunit that will check the other stand for damage. The polypeptide is UvrABC system protein B (Pectobacterium atrosepticum (strain SCRI 1043 / ATCC BAA-672) (Erwinia carotovora subsp. atroseptica)).